A 573-amino-acid polypeptide reads, in one-letter code: MPELSRTAYADLFGPTTGDRVRLADTDLFVEIEEDRSGGPGRSGDEAVFGGGKVLRESMGQGRTTRAQGAPDTVITGALIIDHWGIVKADIGIRDGRITGIGKAGNPDTMDGVHPDLVIGPETEIVAGNGKIVTAGGIDTHVHFIAPGAVDEALASGVTTLIGGGTGPAEGSKATTVTPGAWHLAWMFAALESSPVNIGFLGKGSTMSKESMRDQLRAGVLGFKIHEDWGATPAVISACLDVCEESGVQLAVHSDTLNEAGFVGDTFDAVAGRTLHAFHVEGAGGGHAPDMITAVSLPNMLPASTNPTRPHTVNTVEEHLDMLMVCHHLNPAVPEDLAFAESRIRPSTIAAEDILHDMGAISIMSSDAQAMGRIGEVILRTWQTAHVMKRRRGFLPGDTRADNLRARRYVAKYTINPAVAQGIEHEVGSVETGKLADLVLWDPRFFGAKPQLVIKGGQIAYAQMGDANASIPTPQPVLPRPMYGALGTAPATNSVNFVSEQAVEDGLPERLGLGRAFVPIRSTRGRTKADMRQNDALPRVEVAADSFAVTIDGELVEPAPVTELPLAQRYFLF.

The Urease domain occupies 136 to 573 (GGIDTHVHFI…LPLAQRYFLF (438 aa)). Residues histidine 141, histidine 143, and lysine 224 each coordinate Ni(2+). Lysine 224 is modified (N6-carboxylysine). Residue histidine 226 coordinates substrate. 2 residues coordinate Ni(2+): histidine 253 and histidine 279. Catalysis depends on histidine 327, which acts as the Proton donor. Aspartate 367 serves as a coordination point for Ni(2+).

It belongs to the metallo-dependent hydrolases superfamily. Urease alpha subunit family. May form a heterohexamer of 3 UreC (alpha) and 3 UreAB (gamma/beta) subunits. May also form a heterotrimer of UreA (gamma), UreB (beta) and UreC (alpha) subunits. Three heterotrimers associate to form the active enzyme. The cofactor is Ni cation. Post-translationally, carboxylation allows a single lysine to coordinate two nickel ions.

Its subcellular location is the cytoplasm. It carries out the reaction urea + 2 H2O + H(+) = hydrogencarbonate + 2 NH4(+). The protein operates within nitrogen metabolism; urea degradation; CO(2) and NH(3) from urea (urease route): step 1/1. The sequence is that of Urease subunit alpha 1 from Streptomyces coelicolor (strain ATCC BAA-471 / A3(2) / M145).